Here is a 728-residue protein sequence, read N- to C-terminus: tRNA (guanine(27)-N(2))-dimethyltransferase (728 aa).

Acidic residues predominate over residues 1–10 (MENMAEEELL). Disordered regions lie at residues 1–78 (MENM…SKRH) and 98–118 (DVDS…SQTC). Phosphothreonine is present on threonine 23. The span at 23 to 33 (TPAPDSAPVPA) shows a compositional bias: pro residues. Residues 34 to 46 (PAADTALDSAPTP) are compositionally biased toward low complexity. Positions 47-61 (DSDPAPALAPAPAPA) are enriched in pro residues. Serine 63 carries the phosphoserine modification. Polar residues predominate over residues 101–118 (SASSLNSDNPGTENSQTC). A Nucleolar localization signal motif is present at residues 132 to 136 (HKLRR). Residues 181–203 (YHCIICSATITRRTDMLGHVKRH) form a C2H2-type zinc finger. Residues 224-683 (EILKETDTDI…APLMQFKSIL (460 aa)) form the Trm1 methyltransferase domain. The S-adenosyl-L-methionine site is built by arginine 257, aspartate 304, aspartate 352, and alanine 353. 4 residues coordinate Zn(2+): cysteine 483, cysteine 486, cysteine 508, and cysteine 510. Lysine 580 participates in a covalent cross-link: Glycyl lysine isopeptide (Lys-Gly) (interchain with G-Cter in SUMO2). At serine 607 the chain carries Phosphoserine. Positions 693 to 728 (GAQSEGQMPPAAEDTVTDRVEMSVSDKAEASGCRRW) are disordered. Residues 708-721 (VTDRVEMSVSDKAE) show a composition bias toward basic and acidic residues.

It belongs to the class I-like SAM-binding methyltransferase superfamily. Trm1 family. As to expression, expressed in various neuronal structures during embryonic development, including spinal ganglia, trigeminal nerve and ganglion, olfactory and nasopharyngeal epithelium, nuclei of the metencephalon, thalamus and medulla oblongata. Also expressed in lung, esophagus, epiglottis, ependyma, vertebral column, spinal cord and brown adipose tissue. Expression persists in the adult brain with dynamically changing patterns in cortex and cerebellum.

Its subcellular location is the nucleus. It is found in the nucleolus. It catalyses the reaction guanosine(27) in tRNA(Tyr) + 2 S-adenosyl-L-methionine = N(2)-dimethylguanosine(27) in tRNA(Tyr) + 2 S-adenosyl-L-homocysteine + 2 H(+). Functionally, specifically dimethylates a single guanine residue at position 27 of tRNA(Tyr) using S-adenosyl-L-methionine as donor of the methyl groups. Dimethylation at position 27 of tRNA(Tyr) is required for efficient translation of tyrosine codons. Also required to maintain 3-(3-amino-3-carboxypropyl)uridine (acp3U) in the D-loop of several cytoplasmic tRNAs. May play a role in motor coordination and exploratory behavior. The polypeptide is tRNA (guanine(27)-N(2))-dimethyltransferase (Mus musculus (Mouse)).